We begin with the raw amino-acid sequence, 347 residues long: Probable dual-specificity RNA methyltransferase RlmN (347 aa).

Glutamate 93 functions as the Proton acceptor in the catalytic mechanism. The 224-residue stretch at 100–323 folds into the Radical SAM core domain; that stretch reads KAKRKTACVS…KKAGLNISTR (224 aa). Cysteine 107 and cysteine 334 are joined by a disulfide. [4Fe-4S] cluster is bound by residues cysteine 114, cysteine 118, and cysteine 121. S-adenosyl-L-methionine contacts are provided by residues 160–161, serine 192, 215–217, and asparagine 291; these read GE and SLT. Residue cysteine 334 is the S-methylcysteine intermediate of the active site.

This sequence belongs to the radical SAM superfamily. RlmN family. It depends on [4Fe-4S] cluster as a cofactor.

The protein localises to the cytoplasm. It catalyses the reaction adenosine(2503) in 23S rRNA + 2 reduced [2Fe-2S]-[ferredoxin] + 2 S-adenosyl-L-methionine = 2-methyladenosine(2503) in 23S rRNA + 5'-deoxyadenosine + L-methionine + 2 oxidized [2Fe-2S]-[ferredoxin] + S-adenosyl-L-homocysteine. The enzyme catalyses adenosine(37) in tRNA + 2 reduced [2Fe-2S]-[ferredoxin] + 2 S-adenosyl-L-methionine = 2-methyladenosine(37) in tRNA + 5'-deoxyadenosine + L-methionine + 2 oxidized [2Fe-2S]-[ferredoxin] + S-adenosyl-L-homocysteine. Functionally, specifically methylates position 2 of adenine 2503 in 23S rRNA and position 2 of adenine 37 in tRNAs. This Treponema denticola (strain ATCC 35405 / DSM 14222 / CIP 103919 / JCM 8153 / KCTC 15104) protein is Probable dual-specificity RNA methyltransferase RlmN.